Reading from the N-terminus, the 99-residue chain is Mu-hexatoxin-Mg1c (99 aa).

3 disulfide bridges follow: cysteine 61-cysteine 75, cysteine 68-cysteine 80, and cysteine 74-cysteine 94.

It belongs to the neurotoxin 14 (magi-1) family. 09 (magi-1) subfamily. As to expression, expressed by the venom gland.

It localises to the secreted. In terms of biological role, inhibits voltage-gated sodium channels by binding to site 3. Insecticidal neurotoxin. The protein is Mu-hexatoxin-Mg1c of Macrothele gigas (Japanese funnel web spider).